Here is a 345-residue protein sequence, read N- to C-terminus: MNTAELLRKIIRRENLTEDEARSIANSVMKAEVPEIVTAGFLVGLATKGESVEEITGFAKAMRDNALHINFPSALDTAGTGGDGLNTLNVSTAVALLISQVYPVAKHGNRAVSGKSGSADVLEALGYNIIVKPELAEKLIKESKFVFLFAQLYHPAMKNVANVRKTLGVRTIFNVLGPLTNPANARYQMIGVFSKEFLPKLAEAVVRLDYDRVILYNGFPSLDEISTQGITYVYEIEKDKIVSYTVSINDFGLKDEIPVSKLTVNDATHSALRILKAFKGKDEEARRFIGINTAMALYLIRKVKDLKDGYEYALQLMDSGIPHVRSLIEKNGDLSNFNKLVEKID.

Residues G79, 82-83, T87, 89-92, 106-114, and S118 each bind 5-phospho-alpha-D-ribose 1-diphosphate; these read GD, NVST, and KHGNRAVSG. Position 79 (G79) interacts with anthranilate. S91 lines the Mg(2+) pocket. N109 is a binding site for anthranilate. R164 serves as a coordination point for anthranilate. Mg(2+) is bound by residues D223 and E224.

The protein belongs to the anthranilate phosphoribosyltransferase family. In terms of assembly, homodimer. Mg(2+) serves as cofactor.

It catalyses the reaction N-(5-phospho-beta-D-ribosyl)anthranilate + diphosphate = 5-phospho-alpha-D-ribose 1-diphosphate + anthranilate. Its pathway is amino-acid biosynthesis; L-tryptophan biosynthesis; L-tryptophan from chorismate: step 2/5. Its function is as follows. Catalyzes the transfer of the phosphoribosyl group of 5-phosphorylribose-1-pyrophosphate (PRPP) to anthranilate to yield N-(5'-phosphoribosyl)-anthranilate (PRA). The protein is Anthranilate phosphoribosyltransferase of Sulfurisphaera tokodaii (strain DSM 16993 / JCM 10545 / NBRC 100140 / 7) (Sulfolobus tokodaii).